The sequence spans 635 residues: Factor of DNA methylation 2 (635 aa).

Positions 289-471 (LDEKKNLHQA…ESMNSVLMTK (183 aa)) form a coiled coil. Residues 350 to 365 (ELERQKLDEDKRKSDA) are compositionally biased toward basic and acidic residues. The disordered stretch occupies residues 350-376 (ELERQKLDEDKRKSDAMNKSLQLASRE).

In terms of assembly, forms a complex with IDN2 and FMD1/INDL1. Highly expressed in flowers and at lower levels in roots, leaves and stems.

Its function is as follows. Forms a complex with IDN2 and FDM1/IDNL1 that is required for RNA-directed DNA methylation (RdDM) and that functions at a downstream step of the RdDM pathway. The chain is Factor of DNA methylation 2 from Arabidopsis thaliana (Mouse-ear cress).